Consider the following 324-residue polypeptide: Glyoxylate/hydroxypyruvate reductase B (324 aa).

Catalysis depends on residues R237 and E266. Residue H285 is the Proton donor of the active site.

This sequence belongs to the D-isomer specific 2-hydroxyacid dehydrogenase family. GhrB subfamily. Homodimer.

It is found in the cytoplasm. It catalyses the reaction glycolate + NADP(+) = glyoxylate + NADPH + H(+). The catalysed reaction is (R)-glycerate + NAD(+) = 3-hydroxypyruvate + NADH + H(+). The enzyme catalyses (R)-glycerate + NADP(+) = 3-hydroxypyruvate + NADPH + H(+). Its function is as follows. Catalyzes the NADPH-dependent reduction of glyoxylate and hydroxypyruvate into glycolate and glycerate, respectively. The protein is Glyoxylate/hydroxypyruvate reductase B of Salmonella schwarzengrund (strain CVM19633).